Consider the following 750-residue polypeptide: Olfactomedin-like protein 2B (750 aa).

Positions Met-1–Ser-22 are cleaved as a signal peptide. Coiled coils occupy residues Ala-40–Ala-68 and Lys-179–Asn-213. N-linked (GlcNAc...) asparagine glycans are attached at residues Asn-187 and Asn-213. 2 disordered regions span residues Thr-346–Val-437 and Val-452–Glu-484. 2 stretches are compositionally biased toward polar residues: residues Gln-354 to Ser-384 and Pro-393 to Ser-413. A compositionally biased stretch (low complexity) spans Val-416 to Ala-430. An Olfactomedin-like domain is found at Arg-493–Tyr-750. Residues Cys-494 and Cys-680 are joined by a disulfide bond. Residue Asn-695 is glycosylated (N-linked (GlcNAc...) asparagine).

As to quaternary structure, homodimer. Binds to heparin and chondroitin sulfate E. In terms of processing, O-glycosylated and N-glycosylated.

The protein localises to the secreted. In Homo sapiens (Human), this protein is Olfactomedin-like protein 2B (OLFML2B).